We begin with the raw amino-acid sequence, 169 residues long: Lipoprotein signal peptidase (169 aa).

The next 4 helical transmembrane spans lie at Trp-15–Asn-35, Ile-47–Ser-67, Trp-75–Leu-95, and Ala-107–Val-127. Residues Asp-128 and Asp-146 contribute to the active site. A helical transmembrane segment spans residues Ala-141–Phe-161.

This sequence belongs to the peptidase A8 family.

The protein localises to the cell inner membrane. The enzyme catalyses Release of signal peptides from bacterial membrane prolipoproteins. Hydrolyzes -Xaa-Yaa-Zaa-|-(S,diacylglyceryl)Cys-, in which Xaa is hydrophobic (preferably Leu), and Yaa (Ala or Ser) and Zaa (Gly or Ala) have small, neutral side chains.. It participates in protein modification; lipoprotein biosynthesis (signal peptide cleavage). In terms of biological role, this protein specifically catalyzes the removal of signal peptides from prolipoproteins. The chain is Lipoprotein signal peptidase from Vibrio parahaemolyticus serotype O3:K6 (strain RIMD 2210633).